The sequence spans 362 residues: Molybdenum import ATP-binding protein ModC (362 aa).

One can recognise an ABC transporter domain in the interval 2-236; the sequence is VSPIEVRLQM…LDLPLAMGDD (235 aa). ATP is bound at residue 34–41; it reads GPSGSGKT. One can recognise a Mop domain in the interval 297-362; sequence HSSILNRLPV…AQIKAVAVLA (66 aa).

Belongs to the ABC transporter superfamily. Molybdate importer (TC 3.A.1.8) family. The complex is composed of two ATP-binding proteins (ModC), two transmembrane proteins (ModB) and a solute-binding protein (ModA).

It localises to the cell inner membrane. It catalyses the reaction molybdate(out) + ATP + H2O = molybdate(in) + ADP + phosphate + H(+). Functionally, part of the ABC transporter complex ModABC involved in molybdenum import. Responsible for energy coupling to the transport system. The chain is Molybdenum import ATP-binding protein ModC from Pseudomonas syringae pv. tomato (strain ATCC BAA-871 / DC3000).